The sequence spans 902 residues: Mitochondrial aspartate-glutamate transporter AGC1 (902 aa).

3 Solcar repeats span residues 528 to 614, 622 to 710, and 725 to 813; these read FDSL…MRNR, LSLF…LKKD, and LKTW…FKGF. A run of 6 helical transmembrane segments spans residues 534-554, 591-611, 622-642, 681-702, 731-751, and 786-806; these read FSLGSIAGCIGATVVYPIDFI, GPQLIGVAPEKAIKLTVNDFM, LSLFPEIISGASAGACQVIFT, GLYNGVAACLMRDVPFSAIYFP, LTAGAIAGMPAAFLTTPFDVI, and FKGGGARVLRSSPQFGFTLAA.

It belongs to the mitochondrial carrier (TC 2.A.29) family.

The protein resides in the mitochondrion inner membrane. Its function is as follows. Calcium-dependent mitochondrial aspartate and glutamate carrier. Transport of glutamate in mitochondria is required for mitochondrial transamination reactions and ornithine synthesis. Plays also a role in malate-aspartate NADH shuttle, which is critical for growth on acetate and fatty acids. The protein is Mitochondrial aspartate-glutamate transporter AGC1 (AGC1) of Saccharomyces cerevisiae (strain ATCC 204508 / S288c) (Baker's yeast).